The following is a 525-amino-acid chain: GMP synthase [glutamine-hydrolyzing] (525 aa).

The 200-residue stretch at 8–207 (KILILDFGSQ…ALEICACAAN (200 aa)) folds into the Glutamine amidotransferase type-1 domain. Cysteine 85 acts as the Nucleophile in catalysis. Residues histidine 181 and glutamate 183 contribute to the active site. Positions 208–400 (WKPASIIEDA…LGLPYNMLYR (193 aa)) constitute a GMPS ATP-PPase domain. 235–241 (SGGVDSS) lines the ATP pocket.

Homodimer.

The catalysed reaction is XMP + L-glutamine + ATP + H2O = GMP + L-glutamate + AMP + diphosphate + 2 H(+). The protein operates within purine metabolism; GMP biosynthesis; GMP from XMP (L-Gln route): step 1/1. Its function is as follows. Catalyzes the synthesis of GMP from XMP. The sequence is that of GMP synthase [glutamine-hydrolyzing] from Shewanella halifaxensis (strain HAW-EB4).